The primary structure comprises 221 residues: GTP-binding nuclear protein Ran-A1 (221 aa).

A Small GTPase Ran-type domain is found at 10-174 (DYPSFKLVIV…LYLARKLAGD (165 aa)). 21–28 (DGGTGKTT) is a GTP binding site. The segment at 40-48 (KKYEPTIGV) is switch-I. GTP-binding positions include glycine 71, 125–128 (NKVD), and 153–155 (SAK). Residues 71–87 (GQEKFGGLRDGYYIHGQ) are switch-II. Over residues 199 to 208 (QHEAELAAAA) the composition is skewed to low complexity. The interval 199-221 (QHEAELAAAASQPLPDDDDETFD) is disordered.

This sequence belongs to the small GTPase superfamily. Ran family. As to quaternary structure, found in a nuclear export complex with RanGTP, exportin and pre-miRNA.

It is found in the nucleus. Functionally, GTP-binding protein involved in nucleocytoplasmic transport. Required for the import of protein into the nucleus and also for RNA export. Involved in chromatin condensation and control of cell cycle. The sequence is that of GTP-binding nuclear protein Ran-A1 (RAN-A1) from Nicotiana tabacum (Common tobacco).